Here is a 795-residue protein sequence, read N- to C-terminus: ATP-dependent RNA helicase DHX15 (795 aa).

Positions 1-108 (MSKRHRLDLG…HSTHAGHAGH (108 aa)) are disordered. Ser15 carries the post-translational modification Phosphoserine. The span at 20-62 (AGTDGKDRDRDRDREDRSKDRDRERDRGDREREREKEKEKELR) shows a compositional bias: basic and acidic residues. Over residues 79 to 108 (ASHSAHSTHSAHSTHSTHSAHSTHAGHAGH) the composition is skewed to low complexity. The region spanning 147-313 (TDILVRHQSF…FDNCPLLTIP (167 aa)) is the Helicase ATP-binding domain. 160 to 167 (GETGSGKT) is a binding site for ATP. The DEAH box motif lies at 260–263 (DEAH). Residues 338–518 (TVIQIHMCEE…SVVLQLKKLG (181 aa)) form the Helicase C-terminal domain. An N6-acetyllysine modification is found at Lys488. Residue Lys786 forms a Glycyl lysine isopeptide (Lys-Gly) (interchain with G-Cter in SUMO2) linkage.

The protein belongs to the DEAD box helicase family. DEAH subfamily. DDX15/PRP43 sub-subfamily. In terms of assembly, component of the U11/U12 snRNPs that are part of the U12-type spliceosome. Identified in the Intron Large spliceosome complex (IL, also named intron lariat spliceosome), a post-mRNA release spliceosomal complex containing the excised intron, U2, U5 and U6 snRNPs, and splicing factors; the association may be transient. The IL complex exists in two distinct conformations, one with the DHX15 (ILS2) and one without (ILS1). Interacts with TFIP11 (via G-patch domain); indicative for a recruitment to the IL complex. Interacts with SSB/La. Interacts with GPATCH2 (via G-patch domain); promoting the RNA helicase activity. Interacts with NKRF (via G-patch domain); promoting the RNA helicase activity. Interacts with NLRP6. Ubiquitous.

The protein localises to the nucleus. It localises to the nucleolus. It catalyses the reaction ATP + H2O = ADP + phosphate + H(+). ATPase activity is enhanced upon binding to G-patch domain-containing proteins. G-patch domain-containing proteins act like a brace that tethers mobile sections of DHX15 together, stabilizing a functional conformation with high RNA affinity, thereby promoting the ATPase activity. RNA helicase involved in mRNA processing and antiviral innate immunity. Pre-mRNA processing factor involved in disassembly of spliceosomes after the release of mature mRNA. In cooperation with TFIP11 seem to be involved in the transition of the U2, U5 and U6 snRNP-containing IL complex to the snRNP-free IS complex leading to efficient debranching and turnover of excised introns. Plays a key role in antiviral innate immunity by promoting both MAVS-dependent signaling and NLRP6 inflammasome. Acts as an RNA virus sensor: recognizes and binds viral double stranded RNA (dsRNA) and activates the MAVS-dependent signaling to produce interferon-beta and interferon lambda-3 (IFNL3). Involved in intestinal antiviral innate immunity together with NLRP6: recognizes and binds viral dsRNA and promotes activation of the NLRP6 inflammasome in intestinal epithelial cells to restrict infection by enteric viruses. The NLRP6 inflammasome acts by promoting maturation and secretion of IL18 in the extracellular milieu. Also involved in antibacterial innate immunity by promoting Wnt-induced antimicrobial protein expression in Paneth cells. The polypeptide is ATP-dependent RNA helicase DHX15 (Homo sapiens (Human)).